A 705-amino-acid polypeptide reads, in one-letter code: Putative membrane protein SCO6666 (705 aa).

13 consecutive transmembrane segments (helical) span residues 16-36 (VMLLWGLFLLLGFGLGTGVFG), 144-164 (LHGIDGSAVSGVHVSGGPLLG), 177-197 (NAELISLPVVLVLLLVVFGGL), 201-221 (GLPLLVAVAGIAGAFLALFGF), 232-252 (IQVTTMLGLGLAVDYALLMLV), 280-300 (LFSGLTVAVSLAGLLVFPSTF), 306-326 (LAVAAVVVVDMLAALTLLPAL), 360-380 (VAVLAVAVPALLVVALPVTGM), 504-524 (ALTVLTGIFVLLFAFTGSVLL), 528-548 (TVATTLLSLGAALGAVVWVFQ), 561-581 (LGALSLTAPPLIIAIAFGLAM), 615-635 (VVTCAALLLAVVFGAFMTGGF), and 636-656 (SPILQIGLGLTLAVLIDATVV).

The protein belongs to the resistance-nodulation-cell division (RND) (TC 2.A.6) family. MmpL subfamily.

It localises to the cell membrane. This is Putative membrane protein SCO6666 from Streptomyces coelicolor (strain ATCC BAA-471 / A3(2) / M145).